We begin with the raw amino-acid sequence, 276 residues long: Cerberus (276 aa).

The signal sequence occupies residues 1–20; the sequence is MLLCVLKIYIIFCLVNDGAG. Residues N103, N118, and N160 are each glycosylated (N-linked (GlcNAc...) asparagine). Cystine bridges form between C175/C221, C189/C235, C199/C251, and C203/C253. Positions 175 to 259 constitute a CTCK domain; that stretch reads CKTLPFTQNI…ECACEAHKNN (85 aa). The N-linked (GlcNAc...) asparagine glycan is linked to N234.

The protein belongs to the DAN family. As to quaternary structure, the long chain interacts with nodal/nr-1, bmp4 and wnt8, thereby inhibiting their function. The short chain interacts with nodal/nr-1 but not bmp4 or wnt8. Expressed in the anterior endomesoderm of the early gastrula with expression expanded laterally around the margin at the endoderm/mesoderm boundary.

The protein resides in the secreted. Inhibits wnt, nodal/nr-1 and bmp signaling in the embryo to promote head formation and anterior neural induction. Within the endoderm, acts as an essential mediator of nodal/nr-1-induced cardiogenesis in the overlying mesoderm. This Xenopus tropicalis (Western clawed frog) protein is Cerberus.